The primary structure comprises 376 residues: Succinyl-diaminopimelate desuccinylase (376 aa).

Position 67 (H67) interacts with Zn(2+). Residue D69 is part of the active site. D100 contributes to the Zn(2+) binding site. The active-site Proton acceptor is the E134. Positions 135, 163, and 349 each coordinate Zn(2+).

This sequence belongs to the peptidase M20A family. DapE subfamily. As to quaternary structure, homodimer. Zn(2+) is required as a cofactor. The cofactor is Co(2+).

The enzyme catalyses N-succinyl-(2S,6S)-2,6-diaminopimelate + H2O = (2S,6S)-2,6-diaminopimelate + succinate. It functions in the pathway amino-acid biosynthesis; L-lysine biosynthesis via DAP pathway; LL-2,6-diaminopimelate from (S)-tetrahydrodipicolinate (succinylase route): step 3/3. Catalyzes the hydrolysis of N-succinyl-L,L-diaminopimelic acid (SDAP), forming succinate and LL-2,6-diaminopimelate (DAP), an intermediate involved in the bacterial biosynthesis of lysine and meso-diaminopimelic acid, an essential component of bacterial cell walls. The protein is Succinyl-diaminopimelate desuccinylase of Shewanella woodyi (strain ATCC 51908 / MS32).